Here is a 219-residue protein sequence, read N- to C-terminus: Elongation factor Ts (219 aa).

The involved in Mg(2+) ion dislocation from EF-Tu stretch occupies residues 82 to 85; it reads TDFV.

This sequence belongs to the EF-Ts family.

Its subcellular location is the cytoplasm. In terms of biological role, associates with the EF-Tu.GDP complex and induces the exchange of GDP to GTP. It remains bound to the aminoacyl-tRNA.EF-Tu.GTP complex up to the GTP hydrolysis stage on the ribosome. This Synechococcus sp. (strain CC9902) protein is Elongation factor Ts.